A 147-amino-acid polypeptide reads, in one-letter code: D-aminoacyl-tRNA deacylase (147 aa).

Positions 136 to 137 match the Gly-cisPro motif, important for rejection of L-amino acids motif; that stretch reads GP.

Belongs to the DTD family. Homodimer.

The protein resides in the cytoplasm. The enzyme catalyses glycyl-tRNA(Ala) + H2O = tRNA(Ala) + glycine + H(+). It catalyses the reaction a D-aminoacyl-tRNA + H2O = a tRNA + a D-alpha-amino acid + H(+). Its function is as follows. An aminoacyl-tRNA editing enzyme that deacylates mischarged D-aminoacyl-tRNAs. Also deacylates mischarged glycyl-tRNA(Ala), protecting cells against glycine mischarging by AlaRS. Acts via tRNA-based rather than protein-based catalysis; rejects L-amino acids rather than detecting D-amino acids in the active site. By recycling D-aminoacyl-tRNA to D-amino acids and free tRNA molecules, this enzyme counteracts the toxicity associated with the formation of D-aminoacyl-tRNA entities in vivo and helps enforce protein L-homochirality. The sequence is that of D-aminoacyl-tRNA deacylase from Persephonella marina (strain DSM 14350 / EX-H1).